We begin with the raw amino-acid sequence, 274 residues long: MSLEKSLDEIINERTNGFDHKHSRRRGSQNRISKKSRLTYKFKRASKEHNSSPDDGPWQHDLDQEQDAHPRTTHLQKRQHSENRFGVRVENLHYQVLEKDVLSLFENFHPIRVIMNYDRAGRSEGSCDVYFETSQDAEDAQKTLQSTNLKGSEIQISKKSPPSLFDRISDMPHSARKPSRSSRSNRGFNRSSKKDDRSFRSSSKKSSNNSISHEDLDKELDEYAMSFHAASTVSSHSSQDFTPSIANAHEKNEPVAPSKDSNLTEEMDLQMEAV.

Residues methionine 1–histidine 20 show a composition bias toward basic and acidic residues. Disordered stretches follow at residues methionine 1–aspartate 63, asparagine 148–aspartate 217, and alanine 230–valine 274. The span at lysine 21 to arginine 44 shows a compositional bias: basic residues. Positions alanine 45 to aspartate 63 are enriched in basic and acidic residues. The RRM domain maps to phenylalanine 85–proline 161. The span at asparagine 148–serine 160 shows a compositional bias: polar residues. Composition is skewed to low complexity over residues serine 181–arginine 190 and arginine 200–isoleucine 211. Residues alanine 230 to isoleucine 245 show a composition bias toward polar residues. The span at leucine 263 to valine 274 shows a compositional bias: acidic residues.

This is an uncharacterized protein from Schizosaccharomyces pombe (strain 972 / ATCC 24843) (Fission yeast).